The sequence spans 357 residues: Peptide chain release factor 1 (357 aa).

An N5-methylglutamine modification is found at glutamine 234.

It belongs to the prokaryotic/mitochondrial release factor family. Methylated by PrmC. Methylation increases the termination efficiency of RF1.

The protein localises to the cytoplasm. Its function is as follows. Peptide chain release factor 1 directs the termination of translation in response to the peptide chain termination codons UAG and UAA. In Lactococcus lactis subsp. cremoris (strain MG1363), this protein is Peptide chain release factor 1.